We begin with the raw amino-acid sequence, 58 residues long: uncharacterized protein (58 aa).

This is an uncharacterized protein from Dictyostelium discoideum (Social amoeba).